A 147-amino-acid chain; its full sequence is Acidic phospholipase A2 S7-48J (147 aa).

The signal sequence occupies residues Met-1–Ala-19. A propeptide spanning residues Ser-20–Leu-27 is cleaved from the precursor. Disulfide bonds link Cys-38–Cys-99, Cys-54–Cys-146, Cys-56–Cys-72, Cys-71–Cys-127, Cys-78–Cys-120, Cys-88–Cys-113, and Cys-106–Cys-118. Positions 55, 57, and 59 each coordinate Ca(2+). His-75 is a catalytic residue. Position 76 (Asp-76) interacts with Ca(2+). Residue Asp-121 is part of the active site.

Belongs to the phospholipase A2 family. Group I subfamily. D49 sub-subfamily. The cofactor is Ca(2+). In terms of tissue distribution, expressed by the venom gland.

The protein resides in the secreted. It catalyses the reaction a 1,2-diacyl-sn-glycero-3-phosphocholine + H2O = a 1-acyl-sn-glycero-3-phosphocholine + a fatty acid + H(+). Functionally, snake venom phospholipase A2 (PLA2) that inhibits collagen-induced platelet aggregation. PLA2 catalyzes the calcium-dependent hydrolysis of the 2-acyl groups in 3-sn-phosphoglycerides. The protein is Acidic phospholipase A2 S7-48J of Austrelaps superbus (Lowland copperhead snake).